Reading from the N-terminus, the 321-residue chain is Ferredoxin--NADP reductase (321 aa).

Glu-33, Gln-41, Tyr-46, Val-86, Leu-119, Asp-277, and Ser-318 together coordinate FAD.

This sequence belongs to the ferredoxin--NADP reductase type 2 family. In terms of assembly, homodimer. FAD is required as a cofactor.

The enzyme catalyses 2 reduced [2Fe-2S]-[ferredoxin] + NADP(+) + H(+) = 2 oxidized [2Fe-2S]-[ferredoxin] + NADPH. The protein is Ferredoxin--NADP reductase of Lactococcus lactis subsp. cremoris (strain SK11).